Consider the following 205-residue polypeptide: Protein PYRAB00100 (205 aa).

The region spanning 7–201 is the AMMECR1 domain; that stretch reads EWGEFLVRLA…EEYPRGPVRR (195 aa).

This Pyrococcus abyssi (strain GE5 / Orsay) protein is Protein PYRAB00100.